We begin with the raw amino-acid sequence, 581 residues long: Proline--tRNA ligase (581 aa).

Belongs to the class-II aminoacyl-tRNA synthetase family. ProS type 1 subfamily. As to quaternary structure, homodimer.

The protein localises to the cytoplasm. It carries out the reaction tRNA(Pro) + L-proline + ATP = L-prolyl-tRNA(Pro) + AMP + diphosphate. Its function is as follows. Catalyzes the attachment of proline to tRNA(Pro) in a two-step reaction: proline is first activated by ATP to form Pro-AMP and then transferred to the acceptor end of tRNA(Pro). As ProRS can inadvertently accommodate and process non-cognate amino acids such as alanine and cysteine, to avoid such errors it has two additional distinct editing activities against alanine. One activity is designated as 'pretransfer' editing and involves the tRNA(Pro)-independent hydrolysis of activated Ala-AMP. The other activity is designated 'posttransfer' editing and involves deacylation of mischarged Ala-tRNA(Pro). The misacylated Cys-tRNA(Pro) is not edited by ProRS. This is Proline--tRNA ligase from Rhodococcus erythropolis (strain PR4 / NBRC 100887).